The sequence spans 92 residues: DNA-binding protein HU (92 aa).

Belongs to the bacterial histone-like protein family. In terms of assembly, homodimer.

Functionally, histone-like DNA-binding protein which is capable of wrapping DNA to stabilize it, and thus to prevent its denaturation under extreme environmental conditions. The polypeptide is DNA-binding protein HU (hup) (Buchnera aphidicola subsp. Baizongia pistaciae (strain Bp)).